The chain runs to 606 residues: DNA primase (606 aa).

The segment at 40–64 (CPFHQEKTPSFYVVPEKRFYFCHGC) adopts a CHC2-type zinc-finger fold. Residues 256–349 (KAAVLVEGYF…DPDTFARREG (94 aa)) enclose the Toprim domain. Mg(2+) is bound by residues Glu262, Asp307, and Asp309. A disordered region spans residues 429–451 (VPLPKPAGGDAPPSSPNRPAPPL). The segment covering 441–451 (PSSPNRPAPPL) has biased composition (pro residues).

It belongs to the DnaG primase family. As to quaternary structure, monomer. Interacts with DnaB. Requires Zn(2+) as cofactor. Mg(2+) is required as a cofactor.

The enzyme catalyses ssDNA + n NTP = ssDNA/pppN(pN)n-1 hybrid + (n-1) diphosphate.. RNA polymerase that catalyzes the synthesis of short RNA molecules used as primers for DNA polymerase during DNA replication. The sequence is that of DNA primase from Myxococcus xanthus.